The primary structure comprises 183 residues: Small ribosomal subunit protein uS4 (183 aa).

An S4 RNA-binding domain is found at 106 to 168 (RRLQTQVYRQ…AGSPLAREGH (63 aa)).

The protein belongs to the universal ribosomal protein uS4 family. In terms of assembly, part of the 30S ribosomal subunit. Contacts protein S5. The interaction surface between S4 and S5 is involved in control of translational fidelity.

Functionally, one of the primary rRNA binding proteins, it binds directly to 16S rRNA where it nucleates assembly of the body of the 30S subunit. Its function is as follows. With S5 and S12 plays an important role in translational accuracy. In Methanothrix thermoacetophila (strain DSM 6194 / JCM 14653 / NBRC 101360 / PT) (Methanosaeta thermophila), this protein is Small ribosomal subunit protein uS4.